Here is a 561-residue protein sequence, read N- to C-terminus: DNA ligase B (561 aa).

Lysine 125 serves as the catalytic N6-AMP-lysine intermediate.

The protein belongs to the NAD-dependent DNA ligase family. LigB subfamily.

The catalysed reaction is NAD(+) + (deoxyribonucleotide)n-3'-hydroxyl + 5'-phospho-(deoxyribonucleotide)m = (deoxyribonucleotide)n+m + AMP + beta-nicotinamide D-nucleotide.. Catalyzes the formation of phosphodiester linkages between 5'-phosphoryl and 3'-hydroxyl groups in double-stranded DNA using NAD as a coenzyme and as the energy source for the reaction. The polypeptide is DNA ligase B (Salmonella heidelberg (strain SL476)).